The primary structure comprises 342 residues: dTDP-3,4-didehydro-2,6-dideoxy-alpha-D-glucose 3-reductase (342 aa).

An NADP(+)-binding site is contributed by 19-25 (CADIALR). Position 26 (arginine 26) interacts with substrate. NADP(+) is bound by residues 44-45 (SR), tyrosine 65, leucine 81, and histidine 86. The active-site Proton donor is lysine 104. NADP(+) contacts are provided by arginine 172 and aspartate 184. Residues tyrosine 243 and serine 263 each coordinate substrate.

It belongs to the Gfo/Idh/MocA family.

It carries out the reaction dTDP-4-dehydro-2,6-dideoxy-alpha-D-glucose + NADP(+) = dTDP-3,4-didehydro-2,6-dideoxy-alpha-D-glucose + NADPH + H(+). It functions in the pathway antibiotic biosynthesis; granaticin biosynthesis. Its function is as follows. Involved in the biosynthesis of the 2,6-deoxysugar, dTDP-L-rhodinose, attached to the benzoisochromane quinone chromophore to produce the aglycone antibiotics granaticin and granaticin B. Catalyzes the reduction of the C-3 keto moiety of dTDP-3,4-diketo-2,6-dideoxy-alpha-D-glucose to yield dTDP-4-keto-2,6-dideoxy-alpha-D-glucose. NADPH is the better reductant, however NADH can also be used. The protein is dTDP-3,4-didehydro-2,6-dideoxy-alpha-D-glucose 3-reductase of Streptomyces violaceoruber.